Consider the following 264-residue polypeptide: 4-hydroxy-tetrahydrodipicolinate reductase (264 aa).

9 to 14 (GCSGRM) is a binding site for NAD(+). Arg-36 is an NADP(+) binding site. Residues 100–102 (GTT) and 121–124 (SANM) contribute to the NAD(+) site. His-154 (proton donor/acceptor) is an active-site residue. (S)-2,3,4,5-tetrahydrodipicolinate is bound at residue His-155. Lys-158 (proton donor) is an active-site residue. 164–165 (GT) is a (S)-2,3,4,5-tetrahydrodipicolinate binding site.

It belongs to the DapB family.

The protein localises to the cytoplasm. It catalyses the reaction (S)-2,3,4,5-tetrahydrodipicolinate + NAD(+) + H2O = (2S,4S)-4-hydroxy-2,3,4,5-tetrahydrodipicolinate + NADH + H(+). The enzyme catalyses (S)-2,3,4,5-tetrahydrodipicolinate + NADP(+) + H2O = (2S,4S)-4-hydroxy-2,3,4,5-tetrahydrodipicolinate + NADPH + H(+). It participates in amino-acid biosynthesis; L-lysine biosynthesis via DAP pathway; (S)-tetrahydrodipicolinate from L-aspartate: step 4/4. Functionally, catalyzes the conversion of 4-hydroxy-tetrahydrodipicolinate (HTPA) to tetrahydrodipicolinate. The polypeptide is 4-hydroxy-tetrahydrodipicolinate reductase (Wolbachia sp. subsp. Brugia malayi (strain TRS)).